Here is a 286-residue protein sequence, read N- to C-terminus: Elongation factor Ts (286 aa).

Residues 79 to 82 form an involved in Mg(2+) ion dislocation from EF-Tu region; the sequence is TDFV.

This sequence belongs to the EF-Ts family.

The protein localises to the cytoplasm. Functionally, associates with the EF-Tu.GDP complex and induces the exchange of GDP to GTP. It remains bound to the aminoacyl-tRNA.EF-Tu.GTP complex up to the GTP hydrolysis stage on the ribosome. This is Elongation factor Ts from Wolbachia sp. subsp. Drosophila simulans (strain wRi).